We begin with the raw amino-acid sequence, 276 residues long: Dermonecrotic toxin LvSicTox-alphaII1 (276 aa).

The active site involves histidine 5. Mg(2+)-binding residues include glutamate 25 and aspartate 27. Histidine 41 functions as the Nucleophile in the catalytic mechanism. Cystine bridges form between cysteine 45-cysteine 51 and cysteine 47-cysteine 193. Aspartate 85 is a Mg(2+) binding site.

It belongs to the arthropod phospholipase D family. Class II subfamily. The cofactor is Mg(2+). Expressed by the venom gland.

Its subcellular location is the secreted. The enzyme catalyses an N-(acyl)-sphingosylphosphocholine = an N-(acyl)-sphingosyl-1,3-cyclic phosphate + choline. It catalyses the reaction an N-(acyl)-sphingosylphosphoethanolamine = an N-(acyl)-sphingosyl-1,3-cyclic phosphate + ethanolamine. The catalysed reaction is a 1-acyl-sn-glycero-3-phosphocholine = a 1-acyl-sn-glycero-2,3-cyclic phosphate + choline. It carries out the reaction a 1-acyl-sn-glycero-3-phosphoethanolamine = a 1-acyl-sn-glycero-2,3-cyclic phosphate + ethanolamine. In terms of biological role, dermonecrotic toxins cleave the phosphodiester linkage between the phosphate and headgroup of certain phospholipids (sphingolipid and lysolipid substrates), forming an alcohol (often choline) and a cyclic phosphate. This toxin acts on sphingomyelin (SM). It may also act on ceramide phosphoethanolamine (CPE), lysophosphatidylcholine (LPC) and lysophosphatidylethanolamine (LPE), but not on lysophosphatidylserine (LPS), and lysophosphatidylglycerol (LPG). It acts by transphosphatidylation, releasing exclusively cyclic phosphate products as second products. Induces dermonecrosis, hemolysis, increased vascular permeability, edema, inflammatory response, and platelet aggregation. The protein is Dermonecrotic toxin LvSicTox-alphaII1 of Loxosceles variegata (Recluse spider).